The primary structure comprises 868 residues: DNA mismatch repair protein MutS (868 aa).

620–627 provides a ligand contact to ATP; it reads GPNMGGKS.

The protein belongs to the DNA mismatch repair MutS family.

Functionally, this protein is involved in the repair of mismatches in DNA. It is possible that it carries out the mismatch recognition step. This protein has a weak ATPase activity. This Xylella fastidiosa (strain Temecula1 / ATCC 700964) protein is DNA mismatch repair protein MutS.